We begin with the raw amino-acid sequence, 262 residues long: Abhydrolase domain-containing protein ACTT2-1 (262 aa).

The Peroxisomal targeting signal type 1 motif lies at 260-262 (SKL).

The protein belongs to the AB hydrolase superfamily. AKT2 hydrolase family.

It localises to the peroxisome. It functions in the pathway mycotoxin biosynthesis. Abhydrolase domain-containing protein; part of the gene clusters that mediate the biosynthesis of the host-selective toxins (HSTs) ACT-toxins responsible for brown spot of tangerine disease by the tangerine pathotype which affects tangerines and mandarins. ACT-toxins consist of three moieties, 9,10-epoxy-8-hydroxy-9-methyl-decatrienoic acid (EDA), valine and a polyketide. ACT-toxin I is toxic to both citrus and pear; toxin II the 5''-deoxy derivative of ACT-toxin I, is highly toxic to pear and slightly toxic to citrus. On cellular level, ACT-toxins affect plasma membrane of susceptible cells and cause a sudden increase in loss of K(+) after a few minutes of toxin treatment. The acyl-CoA ligase ACTT1, the hydrolase ACTT2, the enoyl-CoA hydratases ACTT3 and ACTT6, and the acyl-CoA synthetase ACTT5 are all involved in the biosynthesis of the AK-, AF- and ACT-toxin common 9,10-epoxy-8-hydroxy-9-methyl-decatrienoic acid (EDA) structural moiety. The exact role of each enzyme, and of additional enzymes identified within the AF-toxin clusters have still to be determined. On the other hand, ACTTS1 to ACTTS4 are specific to the tangerine pathotype. The function of ACTTS3 is to elongate the polyketide chain portion of ACT-toxin that is unique to this toxin. The enoyl-reductase ACTTS2 might complement the missing enoyl-reductase (ER) domain in ACTTS3 in the synthesis of the polyketide portion of ACT-toxin. The roles of the nonribosomal peptide synthetases-related proteins ACTTS1 and ACTTS4 have also still not been elucidated. The chain is Abhydrolase domain-containing protein ACTT2-1 from Alternaria alternata (Alternaria rot fungus).